Here is a 656-residue protein sequence, read N- to C-terminus: Phosphatidylinositol 4,5-bisphosphate-binding protein SLM2 (656 aa).

The PH domain occupies 445-555 (FEVKSGFLEK…WFGNIKALSS (111 aa)). Residues 577–605 (AKSNENTTESVTPQVTNEQHTRYDDVSSS) form a disordered region. Polar residues predominate over residues 580 to 594 (NENTTESVTPQVTNE). At serine 626 the chain carries Phosphoserine. The PXIXIT-like, required for interaction with CNA1 and CNA2, and calcineurin-dependent dephosphorylation signature appears at 640-645 (PEFYIE). A phosphoserine mark is found at serine 649 and serine 653.

As to quaternary structure, heterodimer of SLM1-SLM2. Binds phosphatidylinositol 4,5-bisphosphate, which is required for function. Interacts with the TORC2 subunits AVO2, BIT61 and TOR2. Interacts with the calcineurin catalytic subunits CNA1 and CNA2.

Its subcellular location is the cell membrane. In terms of biological role, together with SLM1, effector of the TORC2- and calcineurin-signaling pathways. Phosphorylated and activated by TORC2 under favorable growth conditions. Mediates actin polarization via inhibition of calcineurin-dependent transcription. Upon nutrient limitation or environmental stress, gets dephosphorylated by calcineurin, inhibiting interaction with TORC2, thereby antagonizing TORC2 signaling and mediating calcineurin-dependent actin depolarization. Also functions in heat-induced, calcineurin-mediated uracil permease (FUR4) endocytosis. The protein is Phosphatidylinositol 4,5-bisphosphate-binding protein SLM2 (SLM2) of Saccharomyces cerevisiae (strain ATCC 204508 / S288c) (Baker's yeast).